We begin with the raw amino-acid sequence, 514 residues long: Beta-secretase 2 (514 aa).

The first 19 residues, 1-19 (MGALLRALLLLVLAQWLLS), serve as a signal peptide directing secretion. Positions 20-62 (AVPALAPAPFTLPLQVAGATNHRASAVPGLGTPELPRADGLAL) are excised as a propeptide. The Extracellular portion of the chain corresponds to 20–469 (AVPALAPAPF…NEPILWIVSY (450 aa)). Positions 88-425 (YYLEMLIGTP…DRAQRRVGFA (338 aa)) constitute a Peptidase A1 domain. The active site involves Asp-106. N-linked (GlcNAc...) asparagine glycosylation occurs at Asn-166. 3 cysteine pairs are disulfide-bonded: Cys-229–Cys-429, Cys-288–Cys-453, and Cys-340–Cys-389. Asp-299 is a catalytic residue. An N-linked (GlcNAc...) asparagine glycan is attached at Asn-362. The helical transmembrane segment at 470 to 490 (ALMSVCGAILLVLILLLLLPL) threads the bilayer. Residues 491–514 (HCRHAPRDPEVVNDESSLVRHRWK) are Cytoplasmic-facing.

Belongs to the peptidase A1 family. In terms of assembly, monomer. Interacts with RTN3 and RTN4. In terms of processing, undergoes autoproteolytic cleavage. Post-translationally, glycosylated. In terms of tissue distribution, high expression in pancreatic islets. Expressed at much lower levels in the pituitary, colon, and ovaries and is nearly absent from all the other tissues.

It localises to the cell membrane. Its subcellular location is the golgi apparatus. The protein localises to the endoplasmic reticulum. The protein resides in the endosome. It is found in the melanosome. It catalyses the reaction Broad endopeptidase specificity. Cleaves Glu-Val-Asn-Leu-|-Asp-Ala-Glu-Phe in the Swedish variant of Alzheimer's amyloid precursor protein.. Functionally, responsible for the proteolytic processing of the amyloid precursor protein (APP). Cleaves APP, between residues 690 and 691, leading to the generation and extracellular release of beta-cleaved soluble APP, and a corresponding cell-associated C-terminal fragment which is later released by gamma-secretase. It has also been shown that it can cleave APP between residues 671 and 672. Involved in the proteolytic shedding of PMEL at early stages of melanosome biogenesis. Cleaves PMEL within the M-beta fragment to release the amyloidogenic PMEL luminal fragment containing M-alpha and a small portion of M-beta N-terminus. This is a prerequisite step for subsequent processing and assembly of PMEL fibrils into amyloid sheets. Responsible also for the proteolytic processing of CLTRN in pancreatic beta cells. This is Beta-secretase 2 (Bace2) from Mus musculus (Mouse).